A 304-amino-acid chain; its full sequence is Probable casein kinase I homolog ECU03_0910 (304 aa).

A Protein kinase domain is found at 8–304 (IKLVQKIASG…SDSMGDLEIL (297 aa)). ATP-binding positions include 14–22 (IASGAFGDI) and K37. D129 acts as the Proton acceptor in catalysis.

The protein belongs to the protein kinase superfamily. CK1 Ser/Thr protein kinase family. Casein kinase I subfamily.

Its subcellular location is the nucleus. It catalyses the reaction L-seryl-[protein] + ATP = O-phospho-L-seryl-[protein] + ADP + H(+). The enzyme catalyses L-threonyl-[protein] + ATP = O-phospho-L-threonyl-[protein] + ADP + H(+). Involved in DNA repair. May regulate the activity of protein(s) involved in double strand break repair caused by gamma rays. The protein is Probable casein kinase I homolog ECU03_0910 of Encephalitozoon cuniculi (strain GB-M1) (Microsporidian parasite).